The sequence spans 166 residues: Small ribosomal subunit protein uS4 (166 aa).

Positions 102-164 constitute an S4 RNA-binding domain; sequence RRLQTIVWRK…HPSCLEVEKE (63 aa).

The protein belongs to the universal ribosomal protein uS4 family. In terms of assembly, part of the 30S ribosomal subunit. Contacts protein S5. The interaction surface between S4 and S5 is involved in control of translational fidelity.

In terms of biological role, one of the primary rRNA binding proteins, it binds directly to 16S rRNA where it nucleates assembly of the body of the 30S subunit. Functionally, with S5 and S12 plays an important role in translational accuracy. This is Small ribosomal subunit protein uS4 from Korarchaeum cryptofilum (strain OPF8).